The sequence spans 373 residues: Queuine tRNA-ribosyltransferase (373 aa).

The Proton acceptor role is filled by Asp-93. Substrate-binding positions include 93–97, Asp-147, Gln-190, and Gly-219; that span reads DSGGF. Residues 250-256 form an RNA binding region; sequence GVGEPVD. The active-site Nucleophile is the Asp-269. The tract at residues 274 to 278 is RNA binding; important for wobble base 34 recognition; it reads TRLAR. Zn(2+) is bound by residues Cys-307, Cys-309, Cys-312, and His-338.

It belongs to the queuine tRNA-ribosyltransferase family. As to quaternary structure, homodimer. Within each dimer, one monomer is responsible for RNA recognition and catalysis, while the other monomer binds to the replacement base PreQ1. The cofactor is Zn(2+).

The enzyme catalyses 7-aminomethyl-7-carbaguanine + guanosine(34) in tRNA = 7-aminomethyl-7-carbaguanosine(34) in tRNA + guanine. The protein operates within tRNA modification; tRNA-queuosine biosynthesis. Functionally, catalyzes the base-exchange of a guanine (G) residue with the queuine precursor 7-aminomethyl-7-deazaguanine (PreQ1) at position 34 (anticodon wobble position) in tRNAs with GU(N) anticodons (tRNA-Asp, -Asn, -His and -Tyr). Catalysis occurs through a double-displacement mechanism. The nucleophile active site attacks the C1' of nucleotide 34 to detach the guanine base from the RNA, forming a covalent enzyme-RNA intermediate. The proton acceptor active site deprotonates the incoming PreQ1, allowing a nucleophilic attack on the C1' of the ribose to form the product. After dissociation, two additional enzymatic reactions on the tRNA convert PreQ1 to queuine (Q), resulting in the hypermodified nucleoside queuosine (7-(((4,5-cis-dihydroxy-2-cyclopenten-1-yl)amino)methyl)-7-deazaguanosine). The protein is Queuine tRNA-ribosyltransferase of Fusobacterium nucleatum subsp. nucleatum (strain ATCC 25586 / DSM 15643 / BCRC 10681 / CIP 101130 / JCM 8532 / KCTC 2640 / LMG 13131 / VPI 4355).